The primary structure comprises 219 residues: Cytidylate kinase (219 aa).

Residue 21–29 (GPAASGKGT) participates in ATP binding.

The protein belongs to the cytidylate kinase family. Type 1 subfamily.

The protein localises to the cytoplasm. It catalyses the reaction CMP + ATP = CDP + ADP. It carries out the reaction dCMP + ATP = dCDP + ADP. In Rickettsia prowazekii (strain Madrid E), this protein is Cytidylate kinase.